A 400-amino-acid polypeptide reads, in one-letter code: Argininosuccinate synthase (400 aa).

ATP contacts are provided by residues alanine 10 to serine 18 and alanine 38. Tyrosine 89 contacts L-citrulline. Glycine 119 is a binding site for ATP. Positions 121, 125, and 126 each coordinate L-aspartate. Asparagine 125 is a binding site for L-citrulline. Positions 129, 177, 186, 262, and 274 each coordinate L-citrulline.

Belongs to the argininosuccinate synthase family. Type 1 subfamily. In terms of assembly, homotetramer.

It localises to the cytoplasm. The enzyme catalyses L-citrulline + L-aspartate + ATP = 2-(N(omega)-L-arginino)succinate + AMP + diphosphate + H(+). It functions in the pathway amino-acid biosynthesis; L-arginine biosynthesis; L-arginine from L-ornithine and carbamoyl phosphate: step 2/3. The protein is Argininosuccinate synthase of Synechococcus elongatus (strain ATCC 33912 / PCC 7942 / FACHB-805) (Anacystis nidulans R2).